The primary structure comprises 456 residues: Dihydroorotase (456 aa).

Zn(2+) is bound by residues histidine 60 and histidine 62. Substrate contacts are provided by residues 62-64 and asparagine 94; that span reads HFR. 4 residues coordinate Zn(2+): glutamate 146, histidine 180, histidine 234, and aspartate 313. The active site involves aspartate 313. Residue histidine 317 participates in substrate binding.

The protein belongs to the metallo-dependent hydrolases superfamily. DHOase family. Class I DHOase subfamily. It depends on Zn(2+) as a cofactor.

It carries out the reaction (S)-dihydroorotate + H2O = N-carbamoyl-L-aspartate + H(+). It participates in pyrimidine metabolism; UMP biosynthesis via de novo pathway; (S)-dihydroorotate from bicarbonate: step 3/3. Functionally, catalyzes the reversible cyclization of carbamoyl aspartate to dihydroorotate. The protein is Dihydroorotase of Methanosarcina mazei (strain ATCC BAA-159 / DSM 3647 / Goe1 / Go1 / JCM 11833 / OCM 88) (Methanosarcina frisia).